The primary structure comprises 1033 residues: Kinesin-like protein KIN-4A (1033 aa).

The Kinesin motor domain maps to 11-366 (CVKVAVHVRP…LKYANRARNI (356 aa)). An ATP-binding site is contributed by 89–96 (GQTGSGKT). The disordered stretch occupies residues 443 to 462 (QDGSPCSVESDGLKRNLRSR). Over residues 453–462 (DGLKRNLRSR) the composition is skewed to basic and acidic residues. Positions 525–638 (ALKQHFGKKI…IKQEAEQFRQ (114 aa)) form a coiled coil. A disordered region spans residues 763-785 (DELDSKGPSPSRGKNGCARGSSL). The stretch at 863–895 (IEIREMKEQLKELVGLLRQSELQRKEVENELKL) forms a coiled coil.

This sequence belongs to the TRAFAC class myosin-kinesin ATPase superfamily. Kinesin family. KIN-4 subfamily. In terms of assembly, homodimer. Expressed in cotton fibers.

It is found in the cytoplasm. Kinesin-like motor protein involved in the control of the oriented deposition of cellulose microfibrils. The polypeptide is Kinesin-like protein KIN-4A (Gossypium hirsutum (Upland cotton)).